We begin with the raw amino-acid sequence, 478 residues long: Aspartyl/glutamyl-tRNA(Asn/Gln) amidotransferase subunit B (478 aa).

It belongs to the GatB/GatE family. GatB subfamily. As to quaternary structure, heterotrimer of A, B and C subunits.

It catalyses the reaction L-glutamyl-tRNA(Gln) + L-glutamine + ATP + H2O = L-glutaminyl-tRNA(Gln) + L-glutamate + ADP + phosphate + H(+). The enzyme catalyses L-aspartyl-tRNA(Asn) + L-glutamine + ATP + H2O = L-asparaginyl-tRNA(Asn) + L-glutamate + ADP + phosphate + 2 H(+). Functionally, allows the formation of correctly charged Asn-tRNA(Asn) or Gln-tRNA(Gln) through the transamidation of misacylated Asp-tRNA(Asn) or Glu-tRNA(Gln) in organisms which lack either or both of asparaginyl-tRNA or glutaminyl-tRNA synthetases. The reaction takes place in the presence of glutamine and ATP through an activated phospho-Asp-tRNA(Asn) or phospho-Glu-tRNA(Gln). The protein is Aspartyl/glutamyl-tRNA(Asn/Gln) amidotransferase subunit B of Syntrophotalea carbinolica (strain DSM 2380 / NBRC 103641 / GraBd1) (Pelobacter carbinolicus).